Here is a 260-residue protein sequence, read N- to C-terminus: 3'-5' ssDNA/RNA exonuclease TatD (260 aa).

Positions 91, 127, and 152 each coordinate a divalent metal cation.

It belongs to the metallo-dependent hydrolases superfamily. TatD-type hydrolase family. TatD subfamily. As to quaternary structure, monomer. It depends on Mg(2+) as a cofactor.

The protein localises to the cytoplasm. Functionally, 3'-5' exonuclease that prefers single-stranded DNA and RNA. May play a role in the H(2)O(2)-induced DNA damage repair. The chain is 3'-5' ssDNA/RNA exonuclease TatD from Shigella flexneri serotype 5b (strain 8401).